Here is a 662-residue protein sequence, read N- to C-terminus: Probable quinol oxidase subunit 1 (662 aa).

2 helical membrane-spanning segments follow: residues 14-34 and 56-76; these read WMII…IAVI and IGIM…IDAL. His102 lines the Fe(II)-heme a pocket. 8 helical membrane passes run 103–123, 140–160, 187–207, 228–248, 273–293, 311–331, 336–356, and 376–396; these read GVIM…NVVI, VSFW…IVGG, IAIQ…FVTI, FITT…LALM, FFWV…FGMY, MIWA…HHFF, GALI…PTGV, and MLFS…GVML. Positions 279, 283, 328, and 329 each coordinate Cu cation. Residues 279 to 283 constitute a cross-link (1'-histidyl-3'-tyrosine (His-Tyr)); it reads HPEVY. His414 lines the heme a3 pocket. A run of 5 helical transmembrane segments spans residues 415 to 435, 451 to 471, 492 to 512, 587 to 604, and 608 to 627; these read FHYT…IFWY, CFWF…ILGL, FIST…VASI, PVGF…FFLI, and IVPA…WRSF. His416 serves as a coordination point for Fe(II)-heme a.

Belongs to the heme-copper respiratory oxidase family. It depends on Cu cation as a cofactor. Ferriheme a is required as a cofactor. Heme A3. serves as cofactor.

It is found in the cell membrane. It carries out the reaction 2 a quinol + O2 = 2 a quinone + 2 H2O. It participates in energy metabolism; oxidative phosphorylation. Functionally, catalyzes quinol oxidation with the concomitant reduction of oxygen to water. The protein is Probable quinol oxidase subunit 1 (qoxB) of Staphylococcus epidermidis (strain ATCC 35984 / DSM 28319 / BCRC 17069 / CCUG 31568 / BM 3577 / RP62A).